The sequence spans 487 residues: UDP-N-acetylmuramate--L-alanine ligase (487 aa).

126–132 (GTHGKTT) contacts ATP.

It belongs to the MurCDEF family.

It is found in the cytoplasm. The catalysed reaction is UDP-N-acetyl-alpha-D-muramate + L-alanine + ATP = UDP-N-acetyl-alpha-D-muramoyl-L-alanine + ADP + phosphate + H(+). Its pathway is cell wall biogenesis; peptidoglycan biosynthesis. Functionally, cell wall formation. This chain is UDP-N-acetylmuramate--L-alanine ligase, found in Psychromonas ingrahamii (strain DSM 17664 / CCUG 51855 / 37).